The following is a 160-amino-acid chain: Phosphopantetheine adenylyltransferase (160 aa).

Serine 9 contributes to the substrate binding site. Residues 9–10 and histidine 17 each bind ATP; that span reads SF. Substrate is bound by residues lysine 41, leucine 73, and lysine 87. Residues 88–90, glutamate 98, and 123–129 contribute to the ATP site; these read GLR and YGYLSSS.

It belongs to the bacterial CoaD family. As to quaternary structure, homohexamer. It depends on Mg(2+) as a cofactor.

It is found in the cytoplasm. The catalysed reaction is (R)-4'-phosphopantetheine + ATP + H(+) = 3'-dephospho-CoA + diphosphate. It functions in the pathway cofactor biosynthesis; coenzyme A biosynthesis; CoA from (R)-pantothenate: step 4/5. Functionally, reversibly transfers an adenylyl group from ATP to 4'-phosphopantetheine, yielding dephospho-CoA (dPCoA) and pyrophosphate. This chain is Phosphopantetheine adenylyltransferase, found in Caldanaerobacter subterraneus subsp. tengcongensis (strain DSM 15242 / JCM 11007 / NBRC 100824 / MB4) (Thermoanaerobacter tengcongensis).